Here is a 190-residue protein sequence, read N- to C-terminus: Putative resolvase R80 (190 aa).

Residues 11–30 constitute a DNA-binding region (H-T-H motif); that stretch reads SSVLGVHQRTLYQWDKKGWI. The region spanning 61-190 is the Resolvase/invertase-type recombinase catalytic domain; that stretch reads LSICYVRVSS…RNGSRKYSNK (130 aa). A coiled-coil region spans residues 67–92; the sequence is RVSSNSQKDDLERQIKFMKKKYPNHT. Ser-69 acts as the O-(5'-phospho-DNA)-serine intermediate in catalysis.

This sequence belongs to the site-specific recombinase resolvase family.

Functionally, resolvase catalyzes the resolution (a site-specific recombination) of the cointegrated replicon to yield the final transposition products. This Acanthamoeba polyphaga mimivirus (APMV) protein is Putative resolvase R80.